The following is a 275-amino-acid chain: Calcyphosin (275 aa).

A disordered region spans residues 59–87 (PGTTQLTQGPAGRTLGQTQASCPEPRPSM). EF-hand domains follow at residues 107 to 142 (SGIQGLARFFRQLDRDGSRSLDADEFRQGLAKLGLV), 143 to 178 (LDQAEAEGVCRKWDRNGSGTLDLEEFLRALRPPMSQ), 179 to 214 (AREAVIAAAFAKLDRSGDGVVTVDDLRGVYSGRAHP), and 222 to 258 (TEDEVLRRFLDNFDSSEKDGQVTLAEFQDYYSGVSAS). Residues Asp-120, Asp-122, Ser-124, Ser-126, Glu-131, Asp-156, Asn-158, Ser-160, Thr-162, Glu-167, Asp-192, Ser-194, Asp-196, and Asp-203 each contribute to the Ca(2+) site. The residue at position 126 (Ser-126) is a Phosphoserine; by PKA.

Monomer. Does not form oligomers in the presence of calcium.

It localises to the cytoplasm. Functionally, calcium-binding protein. May play a role in cellular signaling events (Potential). The sequence is that of Calcyphosin from Homo sapiens (Human).